A 275-amino-acid polypeptide reads, in one-letter code: Rhamnulose-1-phosphate aldolase (275 aa).

Glutamate 117 is a catalytic residue. Residues histidine 141, histidine 143, and histidine 212 each contribute to the Zn(2+) site.

The protein belongs to the aldolase class II family. RhaD subfamily. As to quaternary structure, homotetramer. Zn(2+) is required as a cofactor.

It localises to the cytoplasm. The enzyme catalyses L-rhamnulose 1-phosphate = (S)-lactaldehyde + dihydroxyacetone phosphate. It functions in the pathway carbohydrate degradation; L-rhamnose degradation; glycerone phosphate from L-rhamnose: step 3/3. In terms of biological role, catalyzes the reversible cleavage of L-rhamnulose-1-phosphate to dihydroxyacetone phosphate (DHAP) and L-lactaldehyde. The sequence is that of Rhamnulose-1-phosphate aldolase from Salmonella paratyphi B (strain ATCC BAA-1250 / SPB7).